A 649-amino-acid chain; its full sequence is 1-deoxy-D-xylulose-5-phosphate synthase 1 (649 aa).

Residues His-79 and 120-122 (AHS) contribute to the thiamine diphosphate site. Asp-151 provides a ligand contact to Mg(2+). Residues 152–153 (GS), Asn-180, Tyr-289, and Glu-371 contribute to the thiamine diphosphate site. Residue Asn-180 coordinates Mg(2+).

The protein belongs to the transketolase family. DXPS subfamily. Homodimer. Mg(2+) serves as cofactor. Thiamine diphosphate is required as a cofactor.

It catalyses the reaction D-glyceraldehyde 3-phosphate + pyruvate + H(+) = 1-deoxy-D-xylulose 5-phosphate + CO2. The protein operates within metabolic intermediate biosynthesis; 1-deoxy-D-xylulose 5-phosphate biosynthesis; 1-deoxy-D-xylulose 5-phosphate from D-glyceraldehyde 3-phosphate and pyruvate: step 1/1. Its function is as follows. Catalyzes the acyloin condensation reaction between C atoms 2 and 3 of pyruvate and glyceraldehyde 3-phosphate to yield 1-deoxy-D-xylulose-5-phosphate (DXP). The protein is 1-deoxy-D-xylulose-5-phosphate synthase 1 of Zymomonas mobilis subsp. mobilis (strain ATCC 31821 / ZM4 / CP4).